The primary structure comprises 245 residues: Orotidine 5'-phosphate decarboxylase (245 aa).

Substrate contacts are provided by residues D22, K44, 71–80, T131, R192, Q201, G221, and R222; that span reads DLKFHDIPNT. K73 functions as the Proton donor in the catalytic mechanism.

Belongs to the OMP decarboxylase family. Type 1 subfamily. As to quaternary structure, homodimer.

It catalyses the reaction orotidine 5'-phosphate + H(+) = UMP + CO2. It functions in the pathway pyrimidine metabolism; UMP biosynthesis via de novo pathway; UMP from orotate: step 2/2. Catalyzes the decarboxylation of orotidine 5'-monophosphate (OMP) to uridine 5'-monophosphate (UMP). The sequence is that of Orotidine 5'-phosphate decarboxylase from Escherichia coli O127:H6 (strain E2348/69 / EPEC).